A 254-amino-acid polypeptide reads, in one-letter code: 5-oxoprolinase subunit A (254 aa).

The protein belongs to the LamB/PxpA family. As to quaternary structure, forms a complex composed of PxpA, PxpB and PxpC.

The catalysed reaction is 5-oxo-L-proline + ATP + 2 H2O = L-glutamate + ADP + phosphate + H(+). Functionally, catalyzes the cleavage of 5-oxoproline to form L-glutamate coupled to the hydrolysis of ATP to ADP and inorganic phosphate. In Rhodopseudomonas palustris (strain BisB5), this protein is 5-oxoprolinase subunit A.